The following is a 289-amino-acid chain: ATP synthase gamma chain (289 aa).

It belongs to the ATPase gamma chain family. In terms of assembly, F-type ATPases have 2 components, CF(1) - the catalytic core - and CF(0) - the membrane proton channel. CF(1) has five subunits: alpha(3), beta(3), gamma(1), delta(1), epsilon(1). CF(0) has three main subunits: a, b and c.

The protein resides in the cell inner membrane. Its function is as follows. Produces ATP from ADP in the presence of a proton gradient across the membrane. The gamma chain is believed to be important in regulating ATPase activity and the flow of protons through the CF(0) complex. This is ATP synthase gamma chain from Azobacteroides pseudotrichonymphae genomovar. CFP2.